A 126-amino-acid chain; its full sequence is Histone H2B type 1-N (126 aa).

Positions 1-12 are enriched in low complexity; it reads MPEPSKSAPAPK. The tract at residues 1 to 36 is disordered; sequence MPEPSKSAPAPKKGSKKAVTKAQKKDGKKRKRSRKE. P2 carries the N-acetylproline modification. An ADP-ribosyl glutamic acid modification is found at E3. K6 is modified (N6-(2-hydroxyisobutyryl)lysine; alternate). K6 is modified (N6-(beta-hydroxybutyryl)lysine; alternate). K6 is modified (N6-acetyllysine; alternate). At K6 the chain carries N6-butyryllysine; alternate. K6 carries the post-translational modification N6-crotonyllysine; alternate. K6 is subject to N6-lactoyllysine; alternate. A Glycyl lysine isopeptide (Lys-Gly) (interchain with G-Cter in SUMO2); alternate cross-link involves residue K6. S7 carries the ADP-ribosylserine modification. N6-(beta-hydroxybutyryl)lysine; alternate is present on K12. N6-acetyllysine; alternate occurs at positions 12 and 13. Residues K12 and K13 each carry the N6-crotonyllysine; alternate modification. An N6-lactoyllysine; alternate modification is found at K12. K13 carries the N6-(2-hydroxyisobutyryl)lysine; alternate modification. S15 bears the Phosphoserine; by STK4/MST1 mark. N6-acetyllysine; alternate is present on residues K16, K17, K21, and K24. N6-crotonyllysine; alternate is present on residues K16, K17, K21, and K24. K16, K17, K21, and K24 each carry N6-lactoyllysine; alternate. An N6-(beta-hydroxybutyryl)lysine; alternate mark is found at K17 and K21. K17 is modified (N6-glutaryllysine; alternate). N6-(2-hydroxyisobutyryl)lysine; alternate occurs at positions 21 and 24. Position 21 is an N6-butyryllysine; alternate (K21). A Glycyl lysine isopeptide (Lys-Gly) (interchain with G-Cter in SUMO2); alternate cross-link involves residue K21. N6-(2-hydroxyisobutyryl)lysine is present on K25. K35 carries the N6-(2-hydroxyisobutyryl)lysine; alternate modification. N6-(beta-hydroxybutyryl)lysine; alternate is present on K35. An N6-crotonyllysine; alternate modification is found at K35. K35 is subject to N6-glutaryllysine; alternate. K35 carries the post-translational modification N6-succinyllysine; alternate. A Glycyl lysine isopeptide (Lys-Gly) (interchain with G-Cter in ubiquitin); alternate cross-link involves residue K35. E36 carries the post-translational modification PolyADP-ribosyl glutamic acid. Phosphoserine; by AMPK is present on S37. Residues K44, K47, and K58 each carry the N6-(2-hydroxyisobutyryl)lysine; alternate modification. K44 carries the post-translational modification N6-lactoyllysine; alternate. Residues K44 and K47 each carry the N6-glutaryllysine; alternate modification. K47 carries the N6-methyllysine; alternate modification. K58 carries the N6,N6-dimethyllysine; alternate modification. Position 80 is a dimethylated arginine (R80). At K86 the chain carries N6-(2-hydroxyisobutyryl)lysine; alternate. An N6-(beta-hydroxybutyryl)lysine; alternate modification is found at K86. N6-acetyllysine; alternate is present on K86. At K86 the chain carries N6-lactoyllysine; alternate. The residue at position 86 (K86) is an N6,N6,N6-trimethyllysine; alternate. R87 and R93 each carry omega-N-methylarginine. K109 is subject to N6-(2-hydroxyisobutyryl)lysine; alternate. K109 carries the post-translational modification N6-lactoyllysine; alternate. The residue at position 109 (K109) is an N6-glutaryllysine; alternate. K109 is subject to N6-methyllysine; alternate. Residue S113 is glycosylated (O-linked (GlcNAc) serine). T116 is modified (phosphothreonine). N6-(2-hydroxyisobutyryl)lysine; alternate occurs at positions 117 and 121. 2 positions are modified to N6-(beta-hydroxybutyryl)lysine; alternate: K117 and K121. K117 and K121 each carry N6-lactoyllysine; alternate. K117 and K121 each carry N6-glutaryllysine; alternate. N6-succinyllysine; alternate is present on residues K117 and K121. Residue K117 is modified to N6-malonyllysine; alternate. K117 carries the N6-methylated lysine; alternate modification. Residue K121 forms a Glycyl lysine isopeptide (Lys-Gly) (interchain with G-Cter in ubiquitin); alternate linkage.

It belongs to the histone H2B family. As to quaternary structure, the nucleosome is a histone octamer containing two molecules each of H2A, H2B, H3 and H4 assembled in one H3-H4 heterotetramer and two H2A-H2B heterodimers. The octamer wraps approximately 147 bp of DNA. Post-translationally, monoubiquitination at Lys-35 (H2BK34Ub) by the MSL1/MSL2 dimer is required for histone H3 'Lys-4' (H3K4me) and 'Lys-79' (H3K79me) methylation and transcription activation at specific gene loci, such as HOXA9 and MEIS1 loci. Similarly, monoubiquitination at Lys-121 (H2BK120Ub) by the RNF20/40 complex gives a specific tag for epigenetic transcriptional activation and is also prerequisite for histone H3 'Lys-4' and 'Lys-79' methylation. It also functions cooperatively with the FACT dimer to stimulate elongation by RNA polymerase II. H2BK120Ub also acts as a regulator of mRNA splicing: deubiquitination by USP49 is required for efficient cotranscriptional splicing of a large set of exons. Phosphorylation at Ser-37 (H2BS36ph) by AMPK in response to stress promotes transcription. Phosphorylated on Ser-15 (H2BS14ph) by STK4/MST1 during apoptosis; which facilitates apoptotic chromatin condensation. Also phosphorylated on Ser-15 in response to DNA double strand breaks (DSBs), and in correlation with somatic hypermutation and immunoglobulin class-switch recombination. In terms of processing, glcNAcylation at Ser-113 promotes monoubiquitination of Lys-121. It fluctuates in response to extracellular glucose, and associates with transcribed genes. Post-translationally, ADP-ribosylated by PARP1 or PARP2 on Ser-7 (H2BS6ADPr) in response to DNA damage. H2BS6ADPr promotes recruitment of CHD1L. Mono-ADP-ribosylated on Glu-3 (H2BE2ADPr) by PARP3 in response to single-strand breaks. Poly ADP-ribosylation on Glu-36 (H2BE35ADPr) by PARP1 regulates adipogenesis: it inhibits phosphorylation at Ser-37 (H2BS36ph), thereby blocking expression of pro-adipogenetic genes. Crotonylation (Kcr) is specifically present in male germ cells and marks testis-specific genes in post-meiotic cells, including X-linked genes that escape sex chromosome inactivation in haploid cells. Crotonylation marks active promoters and enhancers and confers resistance to transcriptional repressors. It is also associated with post-meiotically activated genes on autosomes. In terms of processing, lactylated in macrophages by EP300/P300 by using lactoyl-CoA directly derived from endogenous or exogenous lactate, leading to stimulates gene transcription.

It is found in the nucleus. The protein localises to the chromosome. Functionally, core component of nucleosome. Nucleosomes wrap and compact DNA into chromatin, limiting DNA accessibility to the cellular machineries which require DNA as a template. Histones thereby play a central role in transcription regulation, DNA repair, DNA replication and chromosomal stability. DNA accessibility is regulated via a complex set of post-translational modifications of histones, also called histone code, and nucleosome remodeling. This chain is Histone H2B type 1-N, found in Homo sapiens (Human).